We begin with the raw amino-acid sequence, 270 residues long: Nuclear receptor-interacting protein 2 (270 aa).

Positions 1–27 (MSTGQEARRDEGDSRKEQEASLRDRAH) are enriched in basic and acidic residues. Residues 1–33 (MSTGQEARRDEGDSRKEQEASLRDRAHLSQQRQ) are disordered. The interaction with NR1F2 stretch occupies residues 61–99 (KDLQPHSVIQRRLVEGNQRRLQGESPLLQALIRGHDSSR). An LXXLL motif motif is present at residues 192-196 (LQTLL).

Interacts with NR1F2, RARA and THRB in a ligand-dependent manner. As to expression, expression is restricted to the central nervous system (neurons in the dentate gyrus of the hippocampus, the amygdala, thalamic and hypothalamic regions).

The protein resides in the nucleus. Its function is as follows. Down-regulates transcriptional activation by nuclear receptors, such as NR1F2. The protein is Nuclear receptor-interacting protein 2 (Nrip2) of Mus musculus (Mouse).